Here is a 281-residue protein sequence, read N- to C-terminus: DegV domain-containing protein (281 aa).

One can recognise a DegV domain in the interval 3 to 280 (WKIVSDSGCD…EGGLLMGYEI (278 aa)). Positions 63 and 91 each coordinate hexadecanoate.

Its function is as follows. May bind long-chain fatty acids, such as palmitate, and may play a role in lipid transport or fatty acid metabolism. The chain is DegV domain-containing protein from Streptococcus gordonii.